Here is a 1790-residue protein sequence, read N- to C-terminus: Non-reducing polyketide synthase gsfA (1790 aa).

The N-terminal acylcarrier protein transacylase domain (SAT) stretch occupies residues 20-263 (GDQRTLFRKL…AMRKIQGMWH (244 aa)). Positions 392 to 822 (SSKIAVVGMS…GGNTAMIIEE (431 aa)) constitute a Ketosynthase family 3 (KS3) domain. Active-site for beta-ketoacyl synthase activity residues include Cys563, His698, and His741. Residues 922–1223 (FAFAGQGTFY…CSTLHRDSDN (302 aa)) form a malonyl-CoA:ACP transacylase (MAT) domain region. The product template (PT) domain stretch occupies residues 1298 to 1615 (TSSIHRLYSE…PRIMLNRFFQ (318 aa)). Residues 1302 to 1435 (HRLYSENYDS…AYYEDPSTWL (134 aa)) form an N-terminal hotdog fold region. Residues 1302-1611 (HRLYSENYDS…FRQWPRIMLN (310 aa)) enclose the PKS/mFAS DH domain. Catalysis depends on His1334, which acts as the Proton acceptor; for dehydratase activity. A C-terminal hotdog fold region spans residues 1460-1611 (MANKLTTSLA…FRQWPRIMLN (152 aa)). The Proton donor; for dehydratase activity role is filled by Asp1518. 2 disordered regions span residues 1621–1648 (PPAP…EKTT) and 1686–1718 (LDYS…ADGA). Over residues 1699–1708 (SDERIEKTDS) the composition is skewed to basic and acidic residues. A Carrier domain is found at 1716-1790 (DGANDVTSRA…TIGDLKKLLS (75 aa)). Ser1753 carries the O-(pantetheine 4'-phosphoryl)serine modification.

The catalysed reaction is 6 malonyl-CoA + acetyl-CoA + 4 H(+) = 2-(2,4-dihydroxy-6-oxidobenzoyl)-5-hydroxy-3-methylbenzenolate + 6 CO2 + 7 CoA + H2O. Its pathway is secondary metabolite biosynthesis; terpenoid biosynthesis. Norlichexanthone synthase; part of the gene cluster that mediates the biosynthesis of griseofulvin, an important antifungal drug that has been in use for a long time for treating dermatophyte infections. The first step of the pathway is the formation of the heptaketide backbone by gsfA which is initiated by priming with acetyl-CoA, followed by sequential condensations of 6 malonyl-CoA units. The resulting benzophenone can undergo a spontaneous dehydration to form norlichexanthone. However, the true precursor for the griseofulvin biosynthesis is not norlichexanthone, but the heptaketide benzophenone that is O-methylated at 3-OH by gsfB to produce griseophenone D which is further methylated at 9-OH by gsfC to yield griseophenone C. Griseophenone C is then substrate of halogenase gsfI which is responsible for the regio-specific chlorination at the C13 position to form griseophenone B. The cytochrome P450 gsfF catalyzes the coupling of orcinol and phloroglucinol rings in griseophenone B to form desmethyl-dehydrogriseofulvin A which is further methylated at 5-OH by gsfD to yield dehydrogriseofulvin. Finally, gsfE performs stereospecific reduction of enone 18 of dehydrogriseofulvin to afford the final product griseofulvin. This chain is Non-reducing polyketide synthase gsfA, found in Penicillium aethiopicum.